We begin with the raw amino-acid sequence, 342 residues long: MSINIEQAIIHEISQDSQGQLRCRLRPQPLLNSQAVEMMLEELHQTYTSKSGKGFGYFGIHGDDGEANPAFSNALQEYRAGDLGFVEFTGQASKLLQEELAKYDFSQGGFLLMSCYTSMASDFLFVALLSAKSSMTVLDDMELSQNNHLDLSNIQLAARIDLTEWQADKDSRKYISFIRGRAGRKVADFFLDFMGCVEGVNTKAQNKTLMNAVEDFVASSELTKEERQQCRNKVFEYCSERFDEGADIEIKDLADELADQGMESFYDFARGGSYELDEEFPADKSTLRQLKKFSGTGGGVTISFDGGHLGQRVIYDPISDTLLIKGVPANLKDQLDRRLKGE.

The protein belongs to the YejK family.

It localises to the cytoplasm. The protein localises to the nucleoid. The sequence is that of Nucleoid-associated protein Shewana3_2426 from Shewanella sp. (strain ANA-3).